Reading from the N-terminus, the 415-residue chain is 4-hydroxy-3-methylbut-2-en-1-yl diphosphate synthase (flavodoxin) (415 aa).

[4Fe-4S] cluster contacts are provided by cysteine 298, cysteine 301, cysteine 344, and glutamate 351.

It belongs to the IspG family. The cofactor is [4Fe-4S] cluster.

It catalyses the reaction (2E)-4-hydroxy-3-methylbut-2-enyl diphosphate + oxidized [flavodoxin] + H2O + 2 H(+) = 2-C-methyl-D-erythritol 2,4-cyclic diphosphate + reduced [flavodoxin]. Its pathway is isoprenoid biosynthesis; isopentenyl diphosphate biosynthesis via DXP pathway; isopentenyl diphosphate from 1-deoxy-D-xylulose 5-phosphate: step 5/6. In terms of biological role, converts 2C-methyl-D-erythritol 2,4-cyclodiphosphate (ME-2,4cPP) into 1-hydroxy-2-methyl-2-(E)-butenyl 4-diphosphate. The protein is 4-hydroxy-3-methylbut-2-en-1-yl diphosphate synthase (flavodoxin) of Solibacter usitatus (strain Ellin6076).